Here is a 420-residue protein sequence, read N- to C-terminus: MGNTLFFISLSLIWVMLLYHMFLMQGGFRHYMTFERNIPKWRENMKELPKVSVLIPAHNEEVVIRQTLKAMVNLYYPKDRLEIIVVNDNSSDRTGDIVNEFSEKYDFIKMVITKPPNAGKGKSSALNSGFAESNGDVICVYDADNTPEKMAVYYLVLGLMNDEKAGAVVGKFRVINAAKTLLTRFINIETICFQWMAQGGRWKWFKIATIPGTNFAIRRSIIEKLGGWDDKALAEDTELTIRVYNLGYHIRFFPAAITWEQEPETWKVWWRQRTRWARGNQYVVLKFLAQFFKLKRKRIIFDLFYFFFTYFLFFFGVIMSNAIFVVNLFYDLHLSVGFLAMILWILAFFLFMTEVMITLSIEKTEMNKQNFFIVFLMYFTYSQAWIVLVIYSLFVEIKHRLFKQEVKWYKTERYNQHKSG.

A run of 4 helical transmembrane segments spans residues 4–24 (TLFFISLSLIWVMLLYHMFLM), 299–319 (IIFDLFYFFFTYFLFFFGVIM), 332–352 (LHLSVGFLAMILWILAFFLFM), and 371–391 (FFIVFLMYFTYSQAWIVLVIY).

Belongs to the glycosyltransferase 2 family.

The protein resides in the cell membrane. This is Probable glycosyltransferase YdaM (ydaM) from Bacillus subtilis (strain 168).